Reading from the N-terminus, the 693-residue chain is Protein-glutamine gamma-glutamyltransferase E (693 aa).

At Ala2 the chain carries N-acetylalanine. Phosphotyrosine is present on Tyr111. Thr112 is subject to Phosphothreonine. 5 residues coordinate Ca(2+): Ala222, Asn225, Asn227, Asp228, and Asn230. Residue Cys273 is part of the active site. Residues Asp302, Asp304, Asn306, Ser308, and Asp325 each contribute to the Ca(2+) site. Residues His331 and Asp354 contribute to the active site. Ca(2+) contacts are provided by Asn394, Ser416, Glu444, and Glu449.

It belongs to the transglutaminase superfamily. Transglutaminase family. In terms of assembly, consists of two polypeptide chains, which are synthesized as a precursor form of a single polypeptide. Ca(2+) serves as cofactor. Activated by proteolytic processing. In vitro activation is commonly achieved by cleavage with dispase, a neutral bacterial protease. Dispase cleavage site was proposed to lie between Ser-470 and Ser-471 or between Pro-465 and Phe-466. Physiological activation may be catalyzed by CTSL and, to a lesser extent, by CTSS, but not by CTSB, CTSD nor CTSV.

The protein resides in the cytoplasm. It catalyses the reaction L-glutaminyl-[protein] + L-lysyl-[protein] = [protein]-L-lysyl-N(6)-5-L-glutamyl-[protein] + NH4(+). Functionally, catalyzes the calcium-dependent formation of isopeptide cross-links between glutamine and lysine residues in various proteins, as well as the conjugation of polyamines to proteins. Involved in the formation of the cornified envelope (CE), a specialized component consisting of covalent cross-links of proteins beneath the plasma membrane of terminally differentiated keratinocytes. Catalyzes small proline-rich proteins (SPRR1 and SPRR2) and LOR cross-linking to form small interchain oligomers, which are further cross-linked by TGM1 onto the growing CE scaffold. In hair follicles, involved in cross-linking structural proteins to hardening the inner root sheath. This chain is Protein-glutamine gamma-glutamyltransferase E (TGM3), found in Homo sapiens (Human).